A 210-amino-acid polypeptide reads, in one-letter code: Insulin receptor (210 aa).

The Fibronectin type-III domain maps to 1 to 96 (VSNSSSQIIL…SQILKELEES (96 aa)). 3 N-linked (GlcNAc...) asparagine glycosylation sites follow: N3, N21, and N68. A disordered region spans residues 55 to 78 (WSPPFESEDSQKHNQSEYEDSAGE). Positions 103–111 (EDYLHNVVF) are insulin-binding. The segment at 116 to 169 (TSSGTGAEDPRPSRKRRSLGDVGNVTVAVPTVAAFPNTSSTSTPTSPEEHRPFE) is disordered. Topologically, residues 133 to 210 (SLGDVGNVTV…EERCSVAAYV (78 aa)) are extracellular. Over residues 137–161 (VGNVTVAVPTVAAFPNTSSTSTPTS) the composition is skewed to low complexity. Residues N139 and N152 are each glycosylated (N-linked (GlcNAc...) asparagine). The cysteines at positions 195 and 204 are disulfide-linked.

This sequence belongs to the protein kinase superfamily. Tyr protein kinase family. Insulin receptor subfamily. In terms of assembly, tetramer of 2 alpha and 2 beta chains linked by disulfide bonds. The alpha chains carry the insulin-binding regions, while the beta chains carry the kinase domain. Forms a hybrid receptor with IGF1R, the hybrid is a tetramer consisting of 1 alpha chain and 1 beta chain of INSR and 1 alpha chain and 1 beta chain of IGF1R. Interacts with SORBS1 but dissociates from it following insulin stimulation. Binds SH2B2. Activated form of INSR interacts (via phosphorylated Tyrosine) with the PTB/PID domains of IRS1 and SHC1. The sequences surrounding the phosphorylated NPXY motif contribute differentially to either IRS1 or SHC1 recognition. Interacts (via tyrosines in the C-terminus) with IRS2 (via PTB domain and 591-786 AA); the 591-786 would be the primary anchor of IRS2 to INSR while the PTB domain would have a stabilizing action on the interaction with INSR. Interacts with the SH2 domains of the 85 kDa regulatory subunit of PI3K (PIK3R1) in vitro, when autophosphorylated on tyrosine residues. Interacts with SOCS7. Interacts with SOCS3. Interacts with SOCS1. Interacts with CAV2 (tyrosine-phosphorylated form); the interaction is increased with 'Tyr-27'phosphorylation of CAV2. Interacts with ARRB2. Interacts with GRB10; this interaction blocks the association between IRS1/IRS2 and INSR, significantly reduces insulin-stimulated tyrosine phosphorylation of IRS1 and IRS2 and thus decreases insulin signaling. Interacts with GRB7. Interacts with PDPK1. Interacts with GRB14 (via BPS domain). Interacts (via subunit alpha) with ENPP1 (via 485-599 AA); this interaction blocks autophosphorylation. Interacts with PTPRE. Interacts with STAT5B (via SH2 domain). Interacts with PTPRF. Interacts with ATIC; ATIC together with PRKAA2/AMPK2 and HACD3/PTPLAD1 is proposed to be part of a signaling netwok regulating INSR autophosphorylation and endocytosis. Interacts with the insulin receptor SORL1; this interaction strongly increases its surface exposure, hence strengthens insulin signal reception. Interacts (tyrosine phosphorylated) with CCDC88A/GIV (via SH2-like region); binding requires autophosphorylation of the INSR C-terminal region. Interacts with GNAI3; the interaction is probably mediated by CCDC88A/GIV. Interacts with LMBRD1. Interacts (in response to insulin stimulation) with NCK1; this interaction may recruit PTPN1 to mediate INSR dephosphorylation. After being transported from the endoplasmic reticulum to the Golgi apparatus, the single glycosylated precursor is further glycosylated and then cleaved, followed by its transport to the plasma membrane. Post-translationally, autophosphorylated on tyrosine residues in response to insulin. Dephosphorylated by PTPN1, PTPRE and PTPRF. Dephosphorylated by PTPN2; down-regulates insulin-induced signaling. In terms of processing, S-nitrosylation by BLVRB inhibits the receptor tyrosine kinase, thereby inhibiting insulin signaling.

The protein localises to the cell membrane. It is found in the late endosome. It localises to the lysosome. The catalysed reaction is L-tyrosyl-[protein] + ATP = O-phospho-L-tyrosyl-[protein] + ADP + H(+). Activated in response to insulin. Autophosphorylation activates the kinase activity. PTPN1, PTPRE and PTPRF dephosphorylate important tyrosine residues, thereby reducing INSR activity. Inhibited by ENPP1. GRB10 and GRB14 inhibit the catalytic activity of the INSR, they block access of substrates to the activated receptor. SOCS1 and SOCS3 act as negative regulators of INSR activity, they bind to the activated INRS and interfere with the phosphorylation of INSR substrates. Its function is as follows. Receptor tyrosine kinase which mediates the pleiotropic actions of insulin. Binding of insulin leads to phosphorylation of several intracellular substrates, including, insulin receptor substrates (IRS1, 2, 3, 4), SHC, GAB1, CBL and other signaling intermediates. Each of these phosphorylated proteins serve as docking proteins for other signaling proteins that contain Src-homology-2 domains (SH2 domain) that specifically recognize different phosphotyrosine residues, including the p85 regulatory subunit of PI3K and SHP2. Phosphorylation of IRSs proteins lead to the activation of two main signaling pathways: the PI3K-AKT/PKB pathway, which is responsible for most of the metabolic actions of insulin, and the Ras-MAPK pathway, which regulates expression of some genes and cooperates with the PI3K pathway to control cell growth and differentiation. Binding of the SH2 domains of PI3K to phosphotyrosines on IRS1 leads to the activation of PI3K and the generation of phosphatidylinositol-(3, 4, 5)-triphosphate (PIP3), a lipid second messenger, which activates several PIP3-dependent serine/threonine kinases, such as PDPK1 and subsequently AKT/PKB. The net effect of this pathway is to produce a translocation of the glucose transporter SLC2A4/GLUT4 from cytoplasmic vesicles to the cell membrane to facilitate glucose transport. Moreover, upon insulin stimulation, activated AKT/PKB is responsible for: anti-apoptotic effect of insulin by inducing phosphorylation of BAD; regulates the expression of gluconeogenic and lipogenic enzymes by controlling the activity of the winged helix or forkhead (FOX) class of transcription factors. Another pathway regulated by PI3K-AKT/PKB activation is mTORC1 signaling pathway which regulates cell growth and metabolism and integrates signals from insulin. AKT mediates insulin-stimulated protein synthesis by phosphorylating TSC2 thereby activating mTORC1 pathway. The Ras/RAF/MAP2K/MAPK pathway is mainly involved in mediating cell growth, survival and cellular differentiation of insulin. Phosphorylated IRS1 recruits GRB2/SOS complex, which triggers the activation of the Ras/RAF/MAP2K/MAPK pathway. In addition to binding insulin, the insulin receptor can bind insulin-like growth factors (IGFI and IGFII). When present in a hybrid receptor with IGF1R, binds IGF1. In adipocytes, inhibits lipolysis. The sequence is that of Insulin receptor (INSR) from Macaca mulatta (Rhesus macaque).